The following is a 379-amino-acid chain: Synaptic vesicle membrane protein VAT-1 (379 aa).

Phosphoserine is present on serine 273.

This sequence belongs to the zinc-containing alcohol dehydrogenase family. Quinone oxidoreductase subfamily. Cholinergic synaptic vesicles.

It localises to the cytoplasmic vesicle. Its subcellular location is the secretory vesicle. It is found in the synaptic vesicle membrane. Its function is as follows. May play a central role in the functions mediated by specific classes of synaptic vesicles. This Tetronarce californica (Pacific electric ray) protein is Synaptic vesicle membrane protein VAT-1.